Here is a 311-residue protein sequence, read N- to C-terminus: Pyrimidine-specific ribonucleoside hydrolase RihA (311 aa).

Residue histidine 240 is part of the active site.

This sequence belongs to the IUNH family. RihA subfamily.

In terms of biological role, hydrolyzes cytidine or uridine to ribose and cytosine or uracil, respectively. In Shigella boydii serotype 4 (strain Sb227), this protein is Pyrimidine-specific ribonucleoside hydrolase RihA.